Here is a 214-residue protein sequence, read N- to C-terminus: MIKVLVVDDHDLVRTGITRMLADIDGLQVVGQADSGEESLKKARELKPDVVLMDVKMPGIGGLEATRKMLRSHPDIKVVAVTVCEEDPFPTRLLQAGAAGYMTKGAGLAEMVQAIRLVFAGQRYISPQIAQQLALKSFQPQVNNSPFDLLSEREIQIALMIVGCQKVQTISDKLCLSPKTVNTYRYRIFEKLSISSDVELALLAVRHGMVDASA.

Residues lysine 3–phenylalanine 119 enclose the Response regulatory domain. Aspartate 54 carries the 4-aspartylphosphate modification. An HTH luxR-type domain is found at asparagine 143–glycine 208. The H-T-H motif DNA-binding region spans valine 167 to tyrosine 186.

Phosphorylated by LemA.

Its function is as follows. Forms part of a two-component regulatory system GacA/GacA(LemA). May be involved in lesion formation, swarming and in the production of extracellular protease, syringomycin and N-acyl-L-homoserine lactone (acyl-HSL). The chain is Response regulator GacA (gacA) from Pseudomonas syringae pv. syringae (strain B728a).